Reading from the N-terminus, the 113-residue chain is Venom protein 184 (113 aa).

Positions 1–21 are cleaved as a signal peptide; sequence MKTTLIFCILGIVIPTAVVSS.

In terms of processing, contains 3 disulfide bonds. As to expression, expressed by the venom gland.

It is found in the secreted. The sequence is that of Venom protein 184 from Lychas mucronatus (Chinese swimming scorpion).